Reading from the N-terminus, the 182-residue chain is Ribulose bisphosphate carboxylase small subunit, chloroplastic (182 aa).

A chloroplast-targeting transit peptide spans 1–58 (MACSMISSATVAAVSRASPAQSSMVAPFTCLKSTSAFPVTQKTNNDITSIASNGGRVQ).

This sequence belongs to the RuBisCO small chain family. Heterohexadecamer of 8 large and 8 small subunits.

The protein resides in the plastid. The protein localises to the chloroplast. RuBisCO catalyzes two reactions: the carboxylation of D-ribulose 1,5-bisphosphate, the primary event in carbon dioxide fixation, as well as the oxidative fragmentation of the pentose substrate. Both reactions occur simultaneously and in competition at the same active site. Although the small subunit is not catalytic it is essential for maximal activity. This Betula pendula (European white birch) protein is Ribulose bisphosphate carboxylase small subunit, chloroplastic.